Here is a 185-residue protein sequence, read N- to C-terminus: Ribonuclease M5 1 (185 aa).

The Toprim domain maps to 4-87 (KEVIVVEGKD…AFLTKHDAAP (84 aa)). Glutamate 10, aspartate 56, and aspartate 58 together coordinate Mg(2+).

Belongs to the ribonuclease M5 family. The cofactor is Mg(2+).

Its subcellular location is the cytoplasm. It catalyses the reaction Endonucleolytic cleavage of RNA, removing 21 and 42 nucleotides, respectively, from the 5'- and 3'-termini of a 5S-rRNA precursor.. Its function is as follows. Required for correct processing of both the 5' and 3' ends of 5S rRNA precursor. Cleaves both sides of a double-stranded region yielding mature 5S rRNA in one step. In Ligilactobacillus salivarius (strain UCC118) (Lactobacillus salivarius), this protein is Ribonuclease M5 1.